Reading from the N-terminus, the 265-residue chain is Ubiquinone biosynthesis protein COQ4 homolog, mitochondrial (265 aa).

A mitochondrion-targeting transit peptide spans 1–30 (MMQRSWQSWRRGLTLGLASRRSYVASVEAP). Residues His-170, Asp-171, His-174, and Glu-186 each coordinate Zn(2+).

It belongs to the COQ4 family. Component of a multi-subunit COQ enzyme complex. Zn(2+) serves as cofactor.

The protein resides in the mitochondrion inner membrane. The catalysed reaction is a 4-hydroxy-3-methoxy-5-(all-trans-polyprenyl)benzoate + H(+) = a 2-methoxy-6-(all-trans-polyprenyl)phenol + CO2. The protein operates within cofactor biosynthesis; ubiquinone biosynthesis. Its function is as follows. Lyase that catalyzes the C1-decarboxylation of 4-hydroxy-3-methoxy-5-(all-trans-polyprenyl)benzoic acid into 2-methoxy-6-(all-trans-polyprenyl)phenol during ubiquinone biosynthesis. The chain is Ubiquinone biosynthesis protein COQ4 homolog, mitochondrial from Drosophila virilis (Fruit fly).